A 378-amino-acid chain; its full sequence is tRNA-specific 2-thiouridylase MnmA (378 aa).

Residues 9 to 16 and Met35 contribute to the ATP site; that span reads GVSGGVDS. Residues 94–96 are interaction with target base in tRNA; the sequence is NPD. Cys99 functions as the Nucleophile in the catalytic mechanism. A disulfide bridge links Cys99 with Cys195. Residue Gly123 coordinates ATP. Residues 145 to 147 are interaction with tRNA; sequence KDQ. The active-site Cysteine persulfide intermediate is Cys195. The segment at 307–308 is interaction with tRNA; the sequence is RY.

Belongs to the MnmA/TRMU family.

It localises to the cytoplasm. The catalysed reaction is S-sulfanyl-L-cysteinyl-[protein] + uridine(34) in tRNA + AH2 + ATP = 2-thiouridine(34) in tRNA + L-cysteinyl-[protein] + A + AMP + diphosphate + H(+). Catalyzes the 2-thiolation of uridine at the wobble position (U34) of tRNA, leading to the formation of s(2)U34. This chain is tRNA-specific 2-thiouridylase MnmA, found in Xanthomonas oryzae pv. oryzae (strain MAFF 311018).